The primary structure comprises 218 residues: uncharacterized protein (218 aa).

4 consecutive transmembrane segments (helical) span residues 10 to 30, 55 to 75, 147 to 167, and 175 to 195; these read IPPL…SLGI, IGVG…GYSI, VTGG…AGMA, and FSWI…ILLR.

Belongs to the DedA family.

The protein localises to the cell membrane. This is an uncharacterized protein from Mycobacterium tuberculosis (strain CDC 1551 / Oshkosh).